We begin with the raw amino-acid sequence, 32 residues long: CIPKWNRCGPKMDGVPCCEPYTCTSDYYGNCS.

3 disulfide bridges follow: Cys1/Cys18, Cys8/Cys23, and Cys17/Cys31.

Endosperm.

Functionally, alpha-amylase inhibitor. It is active against alpha-amylases from Tribolium castaneum and Prostephanus truncatus larvae. This is Alpha-amylase inhibitor AAI (AAI) from Amaranthus hypochondriacus (Prince-of-Wales feather).